Reading from the N-terminus, the 187-residue chain is Calcium and integrin-binding family member 2 (187 aa).

3 EF-hand domains span residues R66–S101, P103–S138, and E144–F179. 9 residues coordinate Ca(2+): D116, N118, D120, D127, D157, D159, D161, K163, and D168.

In terms of assembly, monomer. Homodimer. Interacts with WHRN and MYO7A. Interacts with ITGA2B (via C-terminus cytoplasmic tail region); the interactions are stabilized/increased in a calcium and magnesium-dependent manner. Interacts with ITGA7 (via C-terminus cytoplasmic tail region); the interactions are stabilized/increased in a calcium and magnesium-dependent manner. Interacts with TMC1. Interacts with TMC2.

The protein localises to the cytoplasm. It is found in the cell projection. It localises to the stereocilium. The protein resides in the photoreceptor inner segment. Its subcellular location is the cilium. The protein localises to the photoreceptor outer segment. It is found in the cell membrane. It localises to the sarcolemma. Calcium- and integrin-binding protein that plays a role in intracellular calcium homeostasis. Acts as an auxiliary subunit of the sensory mechanoelectrical transduction (MET) channel in hair cells. Essential for mechanoelectrical transduction (MET) currents in auditory hair cells and thereby required for hearing. Regulates the function of hair cell mechanotransduction by controlling the distribution of transmembrane channel-like proteins TMC1 and TMC2, and by regulating the function of the MET channels in hair cells. Required for the maintenance of auditory hair cell stereocilia bundle morphology and function and for hair-cell survival in the cochlea. Critical for proper photoreceptor cell maintenance and function. Plays a role in intracellular calcium homeostasis by decreasing ATP-induced calcium release. The chain is Calcium and integrin-binding family member 2 (Cib2) from Rattus norvegicus (Rat).